A 107-amino-acid polypeptide reads, in one-letter code: Iron-sulfur cluster assembly protein CyaY (107 aa).

The protein belongs to the frataxin family.

In terms of biological role, involved in iron-sulfur (Fe-S) cluster assembly. May act as a regulator of Fe-S biogenesis. This chain is Iron-sulfur cluster assembly protein CyaY, found in Yersinia intermedia.